The sequence spans 297 residues: Formiminotransferase cyclodeaminase-like protein (297 aa).

The segment at 2–196 (LREMLGCCKV…GVVAVGACGW (195 aa)) is formiminotransferase N-subdomain. Residue His89 is the For formimidoyltransferase activity of the active site. 178–187 (GPQEVSKAKG) is a folate binding site.

This sequence belongs to the formiminotransferase family. Expressed constitutively in roots, stems, leaves and flowers.

The protein localises to the golgi apparatus. The protein resides in the trans-Golgi network. The catalysed reaction is (6S)-5-formyl-5,6,7,8-tetrahydrofolate + L-glutamate = N-formyl-L-glutamate + (6S)-5,6,7,8-tetrahydrofolate + H(+). It catalyses the reaction 5-formimidoyltetrahydrofolate + L-glutamate = N-formimidoyl-L-glutamate + (6S)-5,6,7,8-tetrahydrofolate. Its pathway is one-carbon metabolism; tetrahydrofolate interconversion. In terms of biological role, involved in the regulation of root growth. May regulate sorting and/or transportation of trans-Golgi network (TGN) vesicles in root cap peripheral cells, thus influencing the extracellular secretion of mucilage components in the root cap. This chain is Formiminotransferase cyclodeaminase-like protein, found in Arabidopsis thaliana (Mouse-ear cress).